We begin with the raw amino-acid sequence, 393 residues long: Branched-chain-amino-acid aminotransferase, mitochondrial (393 aa).

The transit peptide at M1–Y27 directs the protein to the mitochondrion. Residue Y169 participates in substrate binding. The residue at position 230 (K230) is an N6-(pyridoxal phosphate)lysine. K322 carries the N6-acetyllysine modification.

The protein belongs to the class-IV pyridoxal-phosphate-dependent aminotransferase family. In terms of assembly, homodimer. It depends on pyridoxal 5'-phosphate as a cofactor.

The protein resides in the mitochondrion. It catalyses the reaction L-leucine + 2-oxoglutarate = 4-methyl-2-oxopentanoate + L-glutamate. The enzyme catalyses L-isoleucine + 2-oxoglutarate = (S)-3-methyl-2-oxopentanoate + L-glutamate. The catalysed reaction is L-valine + 2-oxoglutarate = 3-methyl-2-oxobutanoate + L-glutamate. Catalyzes the first reaction in the catabolism of the essential branched chain amino acids leucine, isoleucine, and valine. May also function as a transporter of branched chain alpha-keto acids. In Bos taurus (Bovine), this protein is Branched-chain-amino-acid aminotransferase, mitochondrial (BCAT2).